The following is a 114-amino-acid chain: Large ribosomal subunit protein P2 (114 aa).

Over residues 74–83 the composition is skewed to gly residues; it reads AAAAGGGGGD. The tract at residues 74–114 is disordered; the sequence is AAAAGGGGGDAPAAAAEEPKKEEKSEEESDEELGFSLFDDN. Over residues 98–114 the composition is skewed to acidic residues; sequence SEEESDEELGFSLFDDN.

This sequence belongs to the eukaryotic ribosomal protein P1/P2 family. P1 and P2 exist as dimers at the large ribosomal subunit. Phosphorylated.

Functionally, plays an important role in the elongation step of protein synthesis. The protein is Large ribosomal subunit protein P2 of Parthenium argentatum (Guayule rubber plant).